A 252-amino-acid chain; its full sequence is Carboxymethylenebutenolidase (252 aa).

Residues 1–28 (MCHNKSSAPPTPAHISIQQNRTPGTDPV) form a disordered region. Residues Cys126, Asp183, and His214 contribute to the active site.

It belongs to the dienelactone hydrolase family.

The catalysed reaction is 2-(5-oxo-2,5-dihydrofuran-2-ylidene)acetate + H2O = 4-oxohex-2-enedioate + H(+). It participates in aromatic compound metabolism; 3-chlorocatechol degradation. In terms of biological role, ring cleavage of cyclic ester dienelactone to produce maleylacetate. The polypeptide is Carboxymethylenebutenolidase (clcD) (Rhodococcus opacus (Nocardia opaca)).